A 396-amino-acid chain; its full sequence is Elongation factor Tu (396 aa).

The region spanning 10–205 (KPHVNIGTIG…AVDESIPDPV (196 aa)) is the tr-type G domain. The interval 19 to 26 (GHVDHGKT) is G1. A GTP-binding site is contributed by 19 to 26 (GHVDHGKT). Threonine 26 provides a ligand contact to Mg(2+). The G2 stretch occupies residues 62–66 (GITIN). Residues 83–86 (DAPG) are G3. Residues 83–87 (DAPGH) and 138–141 (NKAD) contribute to the GTP site. Positions 138–141 (NKAD) are G4. Residues 175 to 177 (SAL) are G5.

This sequence belongs to the TRAFAC class translation factor GTPase superfamily. Classic translation factor GTPase family. EF-Tu/EF-1A subfamily. Monomer.

It is found in the cytoplasm. It carries out the reaction GTP + H2O = GDP + phosphate + H(+). Its function is as follows. GTP hydrolase that promotes the GTP-dependent binding of aminoacyl-tRNA to the A-site of ribosomes during protein biosynthesis. In Mycobacterium avium (strain 104), this protein is Elongation factor Tu.